Consider the following 253-residue polypeptide: uncharacterized protein (253 aa).

The span at 1–14 (MKVPILSRLRSLSS) shows a compositional bias: low complexity. Disordered regions lie at residues 1–192 (MKVP…PKSS) and 212–253 (PETV…AIQL). Composition is skewed to basic and acidic residues over residues 17–30 (RNNE…EHQV) and 45–60 (KSDK…KSGE). Composition is skewed to low complexity over residues 63–104 (PSTP…GSDS) and 111–154 (KTLS…QTPR). Residues 215 to 235 (VVTSTPRQQSRPPSAQNTPNF) are compositionally biased toward polar residues. Residues 236-253 (TSQGGSRSTSRRQSAIQL) are compositionally biased toward low complexity.

This is an uncharacterized protein from Dictyostelium discoideum (Social amoeba).